The chain runs to 62 residues: Sperm protamine P1 (62 aa).

Positions 1–62 are disordered; that stretch reads MARYRHSRSR…RYSRRGRRRY (62 aa).

The protein belongs to the protamine P1 family. Testis.

It is found in the nucleus. Its subcellular location is the chromosome. Protamines substitute for histones in the chromatin of sperm during the haploid phase of spermatogenesis. They compact sperm DNA into a highly condensed, stable and inactive complex. This Trichosurus vulpecula (Brush-tailed possum) protein is Sperm protamine P1 (PRM1).